Here is a 356-residue protein sequence, read N- to C-terminus: D-alanine--D-alanine ligase (356 aa).

Positions 134–339 (KQLFAHRGLP…YADLITKLIE (206 aa)) constitute an ATP-grasp domain. 167–222 (KDKLEFPVFVKPANLGSSVGISKCNNEEELKSGIEEAFQFDRKLVIEQGIEAREIE) lines the ATP pocket. Mg(2+) contacts are provided by Asp293, Glu306, and Asn308.

The protein belongs to the D-alanine--D-alanine ligase family. It depends on Mg(2+) as a cofactor. Mn(2+) is required as a cofactor.

The protein localises to the cytoplasm. It catalyses the reaction 2 D-alanine + ATP = D-alanyl-D-alanine + ADP + phosphate + H(+). Its pathway is cell wall biogenesis; peptidoglycan biosynthesis. In terms of biological role, cell wall formation. The polypeptide is D-alanine--D-alanine ligase (Staphylococcus carnosus (strain TM300)).